The chain runs to 175 residues: Small ribosomal subunit protein mS38 (175 aa).

This sequence belongs to the mitochondrion-specific ribosomal protein mS38 family. Component of the mitochondrial small ribosomal subunit (mt-SSU). Mature yeast 74S mitochondrial ribosomes consist of a small (37S) and a large (54S) subunit. The 37S small subunit contains a 15S ribosomal RNA (15S mt-rRNA) and at least 32 different proteins. The 54S large subunit contains a 21S rRNA (21S mt-rRNA) and at least 45 different proteins.

The protein localises to the mitochondrion. Its subcellular location is the mitochondrion inner membrane. Functionally, component of the mitochondrial ribosome (mitoribosome), a dedicated translation machinery responsible for the synthesis of mitochondrial genome-encoded proteins, including at least some of the essential transmembrane subunits of the mitochondrial respiratory chain. The mitoribosomes are attached to the mitochondrial inner membrane and translation products are cotranslationally integrated into the membrane. mS38 is also involved in the splicing of the COX1 mRNA. The protein is Small ribosomal subunit protein mS38 (cox24) of Schizosaccharomyces pombe (strain 972 / ATCC 24843) (Fission yeast).